Reading from the N-terminus, the 299-residue chain is tRNA dimethylallyltransferase (299 aa).

11–18 (GPTAVGKT) lines the ATP pocket. Position 13–18 (13–18 (TAVGKT)) interacts with substrate. The segment at 36-39 (DSQQ) is interaction with substrate tRNA.

It belongs to the IPP transferase family. In terms of assembly, monomer. It depends on Mg(2+) as a cofactor.

The enzyme catalyses adenosine(37) in tRNA + dimethylallyl diphosphate = N(6)-dimethylallyladenosine(37) in tRNA + diphosphate. Functionally, catalyzes the transfer of a dimethylallyl group onto the adenine at position 37 in tRNAs that read codons beginning with uridine, leading to the formation of N6-(dimethylallyl)adenosine (i(6)A). The protein is tRNA dimethylallyltransferase of Streptococcus pyogenes serotype M4 (strain MGAS10750).